Consider the following 368-residue polypeptide: Multifunctional CCA protein (368 aa).

ATP is bound by residues Gly8 and Arg11. The CTP site is built by Gly8 and Arg11. Residues Asp21 and Asp23 each coordinate Mg(2+). 3 residues coordinate ATP: Arg91, Arg137, and Arg140. Residues Arg91, Arg137, and Arg140 each contribute to the CTP site.

The protein belongs to the tRNA nucleotidyltransferase/poly(A) polymerase family. Bacterial CCA-adding enzyme type 1 subfamily. Monomer. Can also form homodimers and oligomers. The cofactor is Mg(2+). Requires Ni(2+) as cofactor.

The enzyme catalyses a tRNA precursor + 2 CTP + ATP = a tRNA with a 3' CCA end + 3 diphosphate. The catalysed reaction is a tRNA with a 3' CCA end + 2 CTP + ATP = a tRNA with a 3' CCACCA end + 3 diphosphate. Its function is as follows. Catalyzes the addition and repair of the essential 3'-terminal CCA sequence in tRNAs without using a nucleic acid template. Adds these three nucleotides in the order of C, C, and A to the tRNA nucleotide-73, using CTP and ATP as substrates and producing inorganic pyrophosphate. tRNA 3'-terminal CCA addition is required both for tRNA processing and repair. Also involved in tRNA surveillance by mediating tandem CCA addition to generate a CCACCA at the 3' terminus of unstable tRNAs. While stable tRNAs receive only 3'-terminal CCA, unstable tRNAs are marked with CCACCA and rapidly degraded. The protein is Multifunctional CCA protein of Pseudomonas putida (strain ATCC 47054 / DSM 6125 / CFBP 8728 / NCIMB 11950 / KT2440).